The primary structure comprises 100 residues: Large ribosomal subunit protein uL23 (100 aa).

The protein belongs to the universal ribosomal protein uL23 family. As to quaternary structure, part of the 50S ribosomal subunit. Contacts protein L29, and trigger factor when it is bound to the ribosome.

In terms of biological role, one of the early assembly proteins it binds 23S rRNA. One of the proteins that surrounds the polypeptide exit tunnel on the outside of the ribosome. Forms the main docking site for trigger factor binding to the ribosome. This is Large ribosomal subunit protein uL23 from Acaryochloris marina (strain MBIC 11017).